The primary structure comprises 306 residues: MVSRRKAPRSGQSEQWVLLAPESLSGDAKNLSDETVFVKLRAPFADKGAMFLFINSGQQICEVKAFHEEYRSWFIGQTVQQDGRLLIATPIDPLFLVLPYLIKADKEQGKFQPVEQIVVDEEFPSCGMLLQCTPVAKSLHHVTEEKEIGSKKFHKYSKEKALVWLKKKVDQTVKVLKSSKVCVGGGVQSATFIRSTQGSDVKEEDYTRYAHGLISEYLTEDLREDLSKYLGLPDLSSPTPEPPVKKRRVSDAPVEADEDYTKYNSDNKSRKSNSKMTAAQKSLAKVDKSGMKNISAFFSPKAKAAK.

The disordered stretch occupies residues 232–285 (LPDLSSPTPEPPVKKRRVSDAPVEADEDYTKYNSDNKSRKSNSKMTAAQKSLAK). The segment covering 259 to 269 (DYTKYNSDNKS) has biased composition (basic and acidic residues).

This sequence belongs to the RNase H2 subunit B family. As to quaternary structure, the RNase H2 complex is a heterotrimer composed of the catalytic subunit RNASEH2A and the non-catalytic subunits RNASEH2B and RNASEH2C.

It localises to the nucleus. Non catalytic subunit of RNase H2, an endonuclease that specifically degrades the RNA of RNA:DNA hybrids. Participates in DNA replication, possibly by mediating the removal of lagging-strand Okazaki fragment RNA primers during DNA replication. Mediates the excision of single ribonucleotides from DNA:RNA duplexes. The protein is Ribonuclease H2 subunit B (rnaseh2b) of Xenopus laevis (African clawed frog).